The sequence spans 504 residues: 5-epiaristolochene 1,3-dihydroxylase (504 aa).

Residues 2 to 22 form a helical membrane-spanning segment; sequence QFFSLVSIFLFLSFLFLLRKW. Position 442 (C442) interacts with heme.

This sequence belongs to the cytochrome P450 family. Requires heme as cofactor.

It localises to the membrane. It catalyses the reaction (+)-5-epi-aristolochene + 2 reduced [NADPH--hemoprotein reductase] + 2 O2 = capsidiol + 2 oxidized [NADPH--hemoprotein reductase] + 2 H2O + 2 H(+). Its activity is regulated as follows. Inhibited by ancymidol and ketoconazole. Involved in the biosynthesis of capsidiol. Catalyzes the successive and independent hydroxylations at the C1 and C3 positions of 5-epiaristolochene. The second hydroxylation step is 8-fold more efficient than the first hydroxylation reaction. Capable of utilizing premnaspirodiene as a substrate. The chain is 5-epiaristolochene 1,3-dihydroxylase (CYP71D20) from Nicotiana tabacum (Common tobacco).